The sequence spans 436 residues: G2/mitotic-specific cyclin-B (436 aa).

Positions 1-17 are enriched in polar residues; sequence MSTINNPLNIKTRSHSS. The disordered stretch occupies residues 1 to 33; that stretch reads MSTINNPLNIKTRSHSSMGGGMIMDENKVPKSS.

Belongs to the cyclin family. Cyclin AB subfamily. Interacts with the cdk1 protein kinase to form a serine/threonine kinase holoenzyme complex also known as maturation promoting factor (MPF). The cyclin subunit imparts substrate specificity to the complex.

In terms of biological role, essential for the control of the cell cycle at the G2/M (mitosis) transition. This chain is G2/mitotic-specific cyclin-B (cycB), found in Dictyostelium discoideum (Social amoeba).